The sequence spans 141 residues: Small ribosomal subunit protein uS12 (141 aa).

The protein belongs to the universal ribosomal protein uS12 family. In terms of assembly, part of the 30S ribosomal subunit.

In terms of biological role, with S4 and S5 plays an important role in translational accuracy. Located at the interface of the 30S and 50S subunits. This chain is Small ribosomal subunit protein uS12, found in Methanobrevibacter smithii (strain ATCC 35061 / DSM 861 / OCM 144 / PS).